The chain runs to 147 residues: MALQRTHSLLLLLLLTLLGLGLVQPSYGQDGMYQRFLRQHVHPEETGGSDRYCNLMMQRRKMTLYHCKRFNTFIHEDIWNIRSICSTTNIQCKNGKMNCHEGVVKVTDCRDTGSSRAPNCRYRAMASTRRVVIACEGNPQVPVHFDG.

Residues methionine 1–glycine 28 form the signal peptide. Glutamine 29 carries the pyrrolidone carboxylic acid modification. DUMP is bound by residues arginine 35, histidine 40, lysine 68, asparagine 71, and threonine 72. Histidine 40 serves as the catalytic Proton acceptor. Cystine bridges form between cysteine 53–cysteine 109, cysteine 67–cysteine 120, cysteine 85–cysteine 135, and cysteine 92–cysteine 99. Histidine 144 serves as the catalytic Proton donor. Phenylalanine 145 is a dUMP binding site.

This sequence belongs to the pancreatic ribonuclease family.

It is found in the secreted. Cleaves preferentially after uridine bases. Has antimicrobial activity against uropathogenic E.coli (UPEC). Probably contributes to urinary tract sterility. This Pan troglodytes (Chimpanzee) protein is Ribonuclease 4 (RNASE4).